Here is a 155-residue protein sequence, read N- to C-terminus: 3-hydroxyacyl-[acyl-carrier-protein] dehydratase FabZ (155 aa).

His54 is an active-site residue.

This sequence belongs to the thioester dehydratase family. FabZ subfamily.

It localises to the cytoplasm. The enzyme catalyses a (3R)-hydroxyacyl-[ACP] = a (2E)-enoyl-[ACP] + H2O. In terms of biological role, involved in unsaturated fatty acids biosynthesis. Catalyzes the dehydration of short chain beta-hydroxyacyl-ACPs and long chain saturated and unsaturated beta-hydroxyacyl-ACPs. In Burkholderia mallei (strain NCTC 10247), this protein is 3-hydroxyacyl-[acyl-carrier-protein] dehydratase FabZ.